We begin with the raw amino-acid sequence, 235 residues long: Carboxy-S-adenosyl-L-methionine synthase (235 aa).

Residues Y35, 60 to 62 (GCS), 83 to 84 (DN), N124, and R191 contribute to the S-adenosyl-L-methionine site.

It belongs to the class I-like SAM-binding methyltransferase superfamily. Cx-SAM synthase family. As to quaternary structure, homodimer.

The enzyme catalyses prephenate + S-adenosyl-L-methionine = carboxy-S-adenosyl-L-methionine + 3-phenylpyruvate + H2O. Functionally, catalyzes the conversion of S-adenosyl-L-methionine (SAM) to carboxy-S-adenosyl-L-methionine (Cx-SAM). This is Carboxy-S-adenosyl-L-methionine synthase from Campylobacter jejuni subsp. jejuni serotype O:6 (strain 81116 / NCTC 11828).